Consider the following 371-residue polypeptide: Maltose/maltodextrin import ATP-binding protein MalK (371 aa).

Residues 4-234 (VQLQNVTKAW…PADRFVAGFI (231 aa)) enclose the ABC transporter domain. An ATP-binding site is contributed by 36-43 (GPSGCGKS).

Belongs to the ABC transporter superfamily. Maltooligosaccharide importer (TC 3.A.1.1.1) family. The complex is composed of two ATP-binding proteins (MalK), two transmembrane proteins (MalG and MalK) and a solute-binding protein (MalE).

The protein resides in the cell inner membrane. It catalyses the reaction D-maltose(out) + ATP + H2O = D-maltose(in) + ADP + phosphate + H(+). Its function is as follows. Part of the ABC transporter complex MalEFGK involved in maltose/maltodextrin import. Responsible for energy coupling to the transport system. This chain is Maltose/maltodextrin import ATP-binding protein MalK, found in Escherichia coli O6:K15:H31 (strain 536 / UPEC).